Consider the following 748-residue polypeptide: Photosystem I P700 chlorophyll a apoprotein A1 (748 aa).

8 helical membrane-spanning segments follow: residues 70-93 (VFSA…FHGA), 156-179 (LYST…YHYH), 195-219 (LNHH…HVSL), 291-309 (TAHH…GHQY), 346-369 (WHAQ…HHMY), 385-411 (LSLF…IFLV), 433-455 (AIIS…LYIH), and 530-548 (FLVH…LILL). Positions 572 and 581 each coordinate [4Fe-4S] cluster. 2 helical membrane passes run 588-609 (HVFL…HFSW) and 662-684 (LSAY…MFLF). Histidine 673 is a chlorophyll a' binding site. Positions 681 and 689 each coordinate chlorophyll a. Tryptophan 690 lines the phylloquinone pocket. A helical membrane pass occupies residues 722–742 (AVGVAHYLLGGIATTWAFFLA).

This sequence belongs to the PsaA/PsaB family. The PsaA/B heterodimer binds the P700 chlorophyll special pair and subsequent electron acceptors. PSI consists of a core antenna complex that captures photons, and an electron transfer chain that converts photonic excitation into a charge separation. The eukaryotic PSI reaction center is composed of at least 11 subunits. The cofactor is P700 is a chlorophyll a/chlorophyll a' dimer, A0 is one or more chlorophyll a, A1 is one or both phylloquinones and FX is a shared 4Fe-4S iron-sulfur center..

It is found in the plastid. It localises to the chloroplast thylakoid membrane. It catalyses the reaction reduced [plastocyanin] + hnu + oxidized [2Fe-2S]-[ferredoxin] = oxidized [plastocyanin] + reduced [2Fe-2S]-[ferredoxin]. PsaA and PsaB bind P700, the primary electron donor of photosystem I (PSI), as well as the electron acceptors A0, A1 and FX. PSI is a plastocyanin-ferredoxin oxidoreductase, converting photonic excitation into a charge separation, which transfers an electron from the donor P700 chlorophyll pair to the spectroscopically characterized acceptors A0, A1, FX, FA and FB in turn. Oxidized P700 is reduced on the lumenal side of the thylakoid membrane by plastocyanin. The sequence is that of Photosystem I P700 chlorophyll a apoprotein A1 from Chaetosphaeridium globosum (Charophycean green alga).